Consider the following 614-residue polypeptide: MNKDEELLIEAIENDDLKEVQKLLQEGVDPNILDEDDKPCILSAIRNKNLDIVSVLLENGANPNAVDADGEPIISAAIRTKRLDIINILLENRADPNLQPPRKNTILLKAIQSNNLDIVNAFLNKGANLNALDISGYPIFLKAIKSENLEIINALLEKGANPNLVDKDGSPLLFTAINTKNLDIIDALIKMGANVEAKNKDGNTVLNVLLERRGNVNIISLLIENSQDKEKIFNLKNNNGETFLHLAAQQGNSKIFDKYLDYYPTVNITDKAGYTPLYWSKLLGHTEISNKLIERAEELKETVYTKVTRTKFFENLPSIPKIAVSYNSKVRGETSEATRNKLKYQYCNVEDIDYRKIVPESANAEKKINEEIVNEAKRKAKEFLADKDALVIPGNNSSVDPKIAEHFGGQVNLEKNKFDFARSLAEMAMLEVAIEKGMPIMGICGGHQIINAYLKGKIDEVSKHKHDSIIIEPDSELASIIKRNSPTKDILNQEFWGMHNDKVQEIGGKNRLIDNKDLLKVTATNEHREIEATESQFGAPIRTFQFHPEMSKTTYSNAEIIRDKKIFASFVQSAETFMNKKSLGADIKFKVPVKKSFTEMVLNRKEQQNNQRGI.

9 ANK repeats span residues 3-32 (KDEELLIEAIENDDLKEVQKLLQEGVDPNI), 36-65 (DDKPCILSAIRNKNLDIVSVLLENGANPNA), 69-98 (DGEPIISAAIRTKRLDIINILLENRADPNL), 102-131 (RKNTILLKAIQSNNLDIVNAFLNKGANLNA), 135-164 (SGYPIFLKAIKSENLEIINALLEKGANPNL), 168-197 (DGSPLLFTAINTKNLDIIDALIKMGANVEA), 201-231 (DGNTVLNVLLERRGNVNIISLLIENSQDKEK), 239-268 (NGETFLHLAAQQGNSKIFDKYLDYYPTVNI), and 272-301 (AGYTPLYWSKLLGHTEISNKLIERAEELKE). One can recognise a Glutamine amidotransferase type-1 domain in the interval 348–580 (NVEDIDYRKI…VQSAETFMNK (233 aa)). Residue cysteine 444 is the Nucleophile of the active site. Catalysis depends on residues histidine 547 and glutamate 549.

The protein is Putative ankyrin repeat protein RBE_0997 of Rickettsia bellii (strain RML369-C).